Consider the following 307-residue polypeptide: uncharacterized protein (307 aa).

The tract at residues 254-278 (HSRHHRRHHRRHHHHHHQNSSHSDE) is disordered. The span at 255–272 (SRHHRRHHRRHHHHHHQN) shows a compositional bias: basic residues.

This sequence to yeast YOR062c.

This is an uncharacterized protein from Saccharomyces cerevisiae (strain ATCC 204508 / S288c) (Baker's yeast).